The chain runs to 109 residues: uncharacterized protein (109 aa).

The next 3 helical transmembrane spans lie at 16–36 (YIPLVVLLQMYIIYVEPYYGL), 54–74 (TVYFLVICHSIESAIAFLLCL), and 80–100 (FCSSMKWIVSTFIFGGPTLAM).

Its subcellular location is the membrane. This is an uncharacterized protein from Schizosaccharomyces pombe (strain 972 / ATCC 24843) (Fission yeast).